A 454-amino-acid polypeptide reads, in one-letter code: Lamina-associated polypeptide 2, isoforms beta/gamma (454 aa).

A nucleoplasmic region spans residues 1–410; the sequence is MPEFLEDPSV…KSEKTKKGRS (410 aa). Residues 5–48 form the LEM-like domain; sequence LEDPSVLTKDKLKSELVANNVTLPAGEQRKDVYVQLYLQHLTAR. Disordered regions lie at residues 47–117 and 149–265; these read ARNR…ELTN and LREQ…VETS. The linker stretch occupies residues 49–108; the sequence is NRPPLPAGTNSKGPPDFSSDEEREPTPVLGSGAAAAGRSRAAVGRKATKKTDKPRQEDKD. T57 carries the post-translational modification Phosphothreonine. A phosphoserine mark is found at S59, S66, and S67. Residue T74 is modified to Phosphothreonine. Residues 78 to 93 show a composition bias toward low complexity; that stretch reads GSGAAAAGRSRAAVGR. S79 is subject to Phosphoserine. 2 positions are modified to omega-N-methylarginine: R86 and R88. The span at 97–106 shows a compositional bias: basic and acidic residues; the sequence is KKTDKPRQED. Residues 107 to 117 show a composition bias toward acidic residues; it reads KDDLDVTELTN. An LEM domain is found at 109–153; the sequence is DLDVTELTNEDLLDQLVKYGVNPGPIVGTTRKLYEKKLLKLREQG. The segment at 138–243 is NAKAP95-binding N; that stretch reads TRKLYEKKLL…TSGSSKGGPL (106 aa). T154 is subject to Phosphothreonine. The segment covering 155–178 has biased composition (polar residues); sequence ESRSSTPLPTISSSAENTRQNGSN. A phosphoserine mark is found at S156 and S159. Residues T160 and T164 each carry the phosphothreonine modification. Phosphoserine occurs at positions 166, 168, 177, 180, 184, and 190. Basic and acidic residues predominate over residues 179 to 203; that stretch reads DSDRYSDNEEDSKIELKLEKREPLK. At K207 the chain carries N6-acetyllysine. Position 211 is a phosphothreonine (T211). Polar residues predominate over residues 220 to 237; it reads NQSYSQAGITETEWTSGS. Phosphoserine occurs at positions 222, 224, 250, 254, 265, 292, and 306. The segment at 299–371 is binds lamins B; the sequence is TGNFKHASPI…SCRRPIKGAA (73 aa). The segment at 300–374 is NAKAP95-binding C; that stretch reads GNFKHASPIL…RPIKGAAGRP (75 aa). T312 bears the Phosphothreonine mark. S315 bears the Phosphoserine mark. Residue R320 is modified to Citrulline. S362, S378, and S385 each carry phosphoserine. An N6-acetyllysine modification is found at K389. K401 participates in a covalent cross-link: Glycyl lysine isopeptide (Lys-Gly) (interchain with G-Cter in SUMO2). Position 402 is a phosphoserine (S402). A helical; Signal-anchor for type II membrane protein transmembrane segment spans residues 411-434; it reads IPVWIKILLFVVVAVFLFLVYQAM. Residues 435–454 lie on the Lumenal side of the membrane; it reads ETNQVNPFSNFLHVDPRKSN.

Belongs to the LEM family. In terms of assembly, interacts with LMNB1, LMNB2, BANF1, AKAP8L, GMCL and chromosomes. Isoform Zeta interacts with BANF1/BAF and may sequester it in the cytoplasm. In terms of processing, mitosis-specific phosphorylation specifically abolishes its binding to lamin B and chromosomes. Citrullinated by PADI4. Expressed in many tissues. Most abundant in adult thymus and fetal liver.

It localises to the nucleus inner membrane. It is found in the cytoplasm. Its function is as follows. May help direct the assembly of the nuclear lamina and thereby help maintain the structural organization of the nuclear envelope. Possible receptor for attachment of lamin filaments to the inner nuclear membrane. May be involved in the control of initiation of DNA replication through its interaction with NAKAP95. Thymopoietin (TP) and Thymopentin (TP5) may play a role in T-cell development and function. TP5 is an immunomodulating pentapeptide. In Homo sapiens (Human), this protein is Lamina-associated polypeptide 2, isoforms beta/gamma (TMPO).